The sequence spans 351 residues: Methylthioribose-1-phosphate isomerase (351 aa).

Substrate contacts are provided by residues 51–53, Arg-94, and Gln-199; that span reads RGA. Asp-240 acts as the Proton donor in catalysis. 250–251 is a substrate binding site; the sequence is NK.

Belongs to the EIF-2B alpha/beta/delta subunits family. MtnA subfamily. In terms of assembly, homodimer.

The catalysed reaction is 5-(methylsulfanyl)-alpha-D-ribose 1-phosphate = 5-(methylsulfanyl)-D-ribulose 1-phosphate. It functions in the pathway amino-acid biosynthesis; L-methionine biosynthesis via salvage pathway; L-methionine from S-methyl-5-thio-alpha-D-ribose 1-phosphate: step 1/6. In terms of biological role, catalyzes the interconversion of methylthioribose-1-phosphate (MTR-1-P) into methylthioribulose-1-phosphate (MTRu-1-P). The sequence is that of Methylthioribose-1-phosphate isomerase from Bacillus thuringiensis subsp. konkukian (strain 97-27).